The primary structure comprises 437 residues: MCAPLFQPAIIQSVLDLDVYKINMMQAAYRFYPQTQVRYELIVRSDDNLSDLVEEVREEINRLAELRFDAAQLAYLAEKAPYLTAEFLSYLETFRFHPQQQVSVGIFRTAQGDCQLRVTINGIWHETILYETLVMSIISELRNRRYWAQIPQSQLHKVLEDKLDFLDSELKRRNITNFRFSEMGTRRRFSFAAQKTMLDVLRARVPELLLGTSNYHLAQEFNLTPIGTVAHEWTMAHQALVAVQHSQCVALDKWLEAFNGSLGIALTDTIGIDAFLSDFDLEKATAYAGVRHDSGSPFVWGDKIIAHYESLGIDPSTKTLIFTDGLDFARALDICEYFAGRAQISFGIGTFLANDMGNWTNDKGIRYQPISMVVKMAECNGSPVAKISDEPEKAMCEDIFFLMNLKQRFGLEVDLDKAIETLKQMKRQQKKRIQSVA.

Histidine 231 bears the Phosphohistidine; by autocatalysis mark.

This sequence belongs to the NAPRTase family. Transiently phosphorylated on a His residue during the reaction cycle. Phosphorylation strongly increases the affinity for substrates and increases the rate of nicotinate D-ribonucleotide production. Dephosphorylation regenerates the low-affinity form of the enzyme, leading to product release.

The enzyme catalyses nicotinate + 5-phospho-alpha-D-ribose 1-diphosphate + ATP + H2O = nicotinate beta-D-ribonucleotide + ADP + phosphate + diphosphate. It functions in the pathway cofactor biosynthesis; NAD(+) biosynthesis; nicotinate D-ribonucleotide from nicotinate: step 1/1. Catalyzes the synthesis of beta-nicotinate D-ribonucleotide from nicotinate and 5-phospho-D-ribose 1-phosphate at the expense of ATP. This is Nicotinate phosphoribosyltransferase from Vibrio vulnificus (strain YJ016).